We begin with the raw amino-acid sequence, 331 residues long: tRNA pseudouridine synthase B (331 aa).

Asp-51 serves as the catalytic Nucleophile.

The protein belongs to the pseudouridine synthase TruB family. Type 1 subfamily.

The enzyme catalyses uridine(55) in tRNA = pseudouridine(55) in tRNA. Its function is as follows. Responsible for synthesis of pseudouridine from uracil-55 in the psi GC loop of transfer RNAs. In Verminephrobacter eiseniae (strain EF01-2), this protein is tRNA pseudouridine synthase B.